Here is a 786-residue protein sequence, read N- to C-terminus: Constitutive coactivator of peroxisome proliferator-activated receptor gamma (786 aa).

The segment at 1–561 (MGVRGLQGFV…GTPSLEVLWL (561 aa)) is mediates transactivation of PPARG. Disordered regions lie at residues 371-413 (PNQE…KLPS) and 738-786 (HWDS…WRRY). The segment covering 750–771 (QGYSSYRTDSTHGHSGQSWRNQ) has biased composition (polar residues).

Belongs to the constitutive coactivator of PPAR-gamma family. In terms of assembly, interacts with ESR1 and RXRA. Interacts with PPARG; in a ligand-independent manner. As to expression, ubiquitously expressed (at protein level).

The protein resides in the nucleus. In terms of biological role, functions as a transactivator of PPARG and ESR1. Functions in adipogenesis through PPARG activation. This chain is Constitutive coactivator of peroxisome proliferator-activated receptor gamma (Fam120b), found in Mus musculus (Mouse).